The following is an 87-amino-acid chain: DNA-directed RNA polymerase subunit omega (87 aa).

It belongs to the RNA polymerase subunit omega family. In terms of assembly, the RNAP catalytic core consists of 2 alpha, 1 beta, 1 beta' and 1 omega subunit. When a sigma factor is associated with the core the holoenzyme is formed, which can initiate transcription.

It catalyses the reaction RNA(n) + a ribonucleoside 5'-triphosphate = RNA(n+1) + diphosphate. Its function is as follows. Promotes RNA polymerase assembly. Latches the N- and C-terminal regions of the beta' subunit thereby facilitating its interaction with the beta and alpha subunits. This Acidothermus cellulolyticus (strain ATCC 43068 / DSM 8971 / 11B) protein is DNA-directed RNA polymerase subunit omega.